The chain runs to 108 residues: Hrp pili protein HrpA (108 aa).

A compositionally biased stretch (polar residues) spans 41–56; the sequence is NTGSTDSIDATRSSIS. The interval 41–73 is disordered; sequence NTGSTDSIDATRSSISKGDAPSAELDGTANEEN.

Belongs to the HrpA type 1 family.

It is found in the secreted. It localises to the fimbrium. Functionally, major structural protein of the hrp pilus, which is a component of the type III secretion system (T3SS, Hrp secretion system) required for effector protein delivery, parasitism, and pathogenicity. The hrp pilus functions as a conduit for protein delivery into the host cell. Also, affects the expression of T3SS-associated genes. Required for full expression of genes that encode regulatory, secretion, and effector proteins of the T3SS. HrpA-mediated gene regulation apparently is through effect on the mRNA level of hrpR and hrpS. This chain is Hrp pili protein HrpA (hrpA), found in Pseudomonas savastanoi pv. glycinea (Pseudomonas syringae pv. glycinea).